The sequence spans 453 residues: Tubulin alpha-1/2/3 chain (453 aa).

Glutamine 11 contacts GTP. N6-acetyllysine is present on lysine 40. Residues glutamate 71, serine 140, glycine 144, threonine 145, threonine 179, asparagine 206, and asparagine 228 each coordinate GTP. Glutamate 71 contacts Mg(2+). Glutamate 254 is a catalytic residue. The segment at 429–453 is disordered; it reads EKDYEEVGTESQEGDGEEGEDGGDQ. Over residues 431-453 the composition is skewed to acidic residues; sequence DYEEVGTESQEGDGEEGEDGGDQ.

This sequence belongs to the tubulin family. In terms of assembly, dimer of alpha and beta chains. A typical microtubule is a hollow water-filled tube with an outer diameter of 25 nm and an inner diameter of 15 nM. Alpha-beta heterodimers associate head-to-tail to form protofilaments running lengthwise along the microtubule wall with the beta-tubulin subunit facing the microtubule plus end conferring a structural polarity. Microtubules usually have 13 protofilaments but different protofilament numbers can be found in some organisms and specialized cells. It depends on Mg(2+) as a cofactor. In terms of processing, acetylation of alpha chains at Lys-40 stabilizes microtubules and affects affinity and processivity of microtubule motors. This modification has a role in multiple cellular functions, ranging from cell motility, cell cycle progression or cell differentiation to intracellular trafficking and signaling.

Its subcellular location is the cytoplasm. It is found in the cytoskeleton. The enzyme catalyses GTP + H2O = GDP + phosphate + H(+). Tubulin is the major constituent of microtubules, a cylinder consisting of laterally associated linear protofilaments composed of alpha- and beta-tubulin heterodimers. Microtubules grow by the addition of GTP-tubulin dimers to the microtubule end, where a stabilizing cap forms. Below the cap, tubulin dimers are in GDP-bound state, owing to GTPase activity of alpha-tubulin. The chain is Tubulin alpha-1/2/3 chain (TBA1) from Naegleria gruberi (Amoeba).